Reading from the N-terminus, the 978-residue chain is Glycine dehydrogenase (decarboxylating) (978 aa).

An N6-(pyridoxal phosphate)lysine modification is found at Lys726.

Belongs to the GcvP family. In terms of assembly, the glycine cleavage system is composed of four proteins: P, T, L and H. Pyridoxal 5'-phosphate serves as cofactor.

The catalysed reaction is N(6)-[(R)-lipoyl]-L-lysyl-[glycine-cleavage complex H protein] + glycine + H(+) = N(6)-[(R)-S(8)-aminomethyldihydrolipoyl]-L-lysyl-[glycine-cleavage complex H protein] + CO2. The glycine cleavage system catalyzes the degradation of glycine. The P protein binds the alpha-amino group of glycine through its pyridoxal phosphate cofactor; CO(2) is released and the remaining methylamine moiety is then transferred to the lipoamide cofactor of the H protein. The polypeptide is Glycine dehydrogenase (decarboxylating) (Paraburkholderia phytofirmans (strain DSM 17436 / LMG 22146 / PsJN) (Burkholderia phytofirmans)).